Consider the following 842-residue polypeptide: Amyloid-beta A4 precursor protein-binding family A member 1 (842 aa).

Disordered stretches follow at residues 1–121 (MNHL…DESA), 238–349 (RLHH…EKRD), and 366–439 (KTRT…KESR). Position 82 is a phosphoserine (Ser-82). Basic and acidic residues-rich tracts occupy residues 106–115 (DGYEAERAQD) and 240–258 (HHYD…KEAE). A phosphoserine mark is found at Ser-246, Ser-250, Ser-252, Ser-267, Ser-284, and Ser-289. At Thr-309 the chain carries Phosphothreonine. 2 positions are modified to phosphoserine: Ser-317 and Ser-372. Thr-375 is modified (phosphothreonine). Residues 392–403 (PTRDCDDQRPVD) are compositionally biased toward basic and acidic residues. Positions 404 to 421 (GDSPSPGSSSPLGAESSS) are enriched in low complexity. Phosphoserine occurs at positions 406, 408, 413, and 573. The region spanning 460 to 648 (LIDGIIFAAN…LLNTQDMYND (189 aa)) is the PID domain. The interval 631–648 (LSQKEYSDLLNTQDMYND) is autoinhibitory helix linker. 2 PDZ domains span residues 661 to 746 (DVFI…NIVR) and 752 to 828 (TVLI…MPAA).

In terms of assembly, part of a multimeric complex containing STXBP1 and STX1A. Interacts with STXBP1. Component of the brain-specific heterotrimeric complex (LIN-10-LIN-2-LIN-7 complex) composed of at least APBA1, CASK, and LIN7, which associates with the motor protein KIF17 to transport vesicles along microtubules. Within the complex, interacts (via PDZ domain) with the motor protein KIF17; the interaction is direct and is required for association of KIF17 with the cargo that is to be transported. Binds to the cytoplasmic domain of amyloid protein (APP). Interacts (via PDZ 1 and 2 domains) with FSPB. Isoform 3 interacts (via its truncated PID domain) with active, GTP-bound RAB6A. Also interacts with GTP-bound RAB6B. Isoform 3 is expressed in brain.

It localises to the cytoplasm. The protein resides in the perinuclear region. Its subcellular location is the nucleus. The protein localises to the golgi apparatus. Functionally, putative function in synaptic vesicle exocytosis by binding to Munc18-1, an essential component of the synaptic vesicle exocytotic machinery. May modulate processing of the amyloid-beta precursor protein (APP) and hence formation of AAP-beta. Component of the LIN-10-LIN-2-LIN-7 complex, which associates with the motor protein KIF17 to transport vesicles containing N-methyl-D-aspartate (NMDA) receptor subunit NR2B along microtubules. This chain is Amyloid-beta A4 precursor protein-binding family A member 1, found in Mus musculus (Mouse).